Reading from the N-terminus, the 216-residue chain is GTP:AMP phosphotransferase, mitochondrial (216 aa).

15-20 (GSGKGT) is a GTP binding site. Positions 35 to 64 (STGDILRQNIIKNTELGKKAKQYIAEGKLV) are NMPbind. Residues Thr-36, Arg-41, 62 to 64 (KLV), 89 to 92 (GFPR), and Gln-96 contribute to the AMP site. Residues 125-162 (NRWIHAPSGRVYNIGFKNPKVPGKDDVTGEPLMQREDD) are LID. GTP is bound by residues Arg-126 and 135–136 (VY). Positions 159 and 170 each coordinate AMP. Thr-199 is a GTP binding site.

Belongs to the adenylate kinase family. AK3 subfamily. Monomer. In terms of tissue distribution, ubiquitously expressed with highest levels expressed in the abdomen, suggesting a function in muscle tissues.

Its subcellular location is the mitochondrion matrix. It carries out the reaction a ribonucleoside 5'-triphosphate + AMP = a ribonucleoside 5'-diphosphate + ADP. Functionally, involved in maintaining the homeostasis of cellular nucleotides by catalyzing the interconversion of nucleoside phosphates. Has GTP:AMP phosphotransferase and ITP:AMP phosphotransferase activities. The protein is GTP:AMP phosphotransferase, mitochondrial of Drosophila melanogaster (Fruit fly).